Consider the following 291-residue polypeptide: Elongation factor Ts (291 aa).

The interval 79-82 is involved in Mg(2+) ion dislocation from EF-Tu; that stretch reads TDFV.

Belongs to the EF-Ts family.

The protein resides in the cytoplasm. Associates with the EF-Tu.GDP complex and induces the exchange of GDP to GTP. It remains bound to the aminoacyl-tRNA.EF-Tu.GTP complex up to the GTP hydrolysis stage on the ribosome. The polypeptide is Elongation factor Ts (Jannaschia sp. (strain CCS1)).